Here is a 1138-residue protein sequence, read N- to C-terminus: Nuclear pore complex-interacting protein family member B13 (1138 aa).

The chain crosses the membrane as a helical span at residues 73–93; sequence VVITLWIVYLWVSLLKTIFWS. Disordered regions lie at residues 242–578 and 747–1138; these read RMGH…NIKT and ERLR…RRLS. A compositionally biased stretch (polar residues) spans 252–263; it reads QQHSITDNSLSL. Over residues 349-359 the composition is skewed to pro residues; the sequence is PLPPSAPPSAP. Composition is skewed to basic and acidic residues over residues 406 to 416, 448 to 458, 490 to 500, 532 to 542, 782 to 792, 824 to 834, 866 to 876, 908 to 918, 950 to 960, and 992 to 1002; these read DNIKTPAERLR.

Belongs to the NPIP family.

The protein resides in the membrane. In Homo sapiens (Human), this protein is Nuclear pore complex-interacting protein family member B13.